Reading from the N-terminus, the 235-residue chain is Phosphoribosylaminoimidazole-succinocarboxamide synthase (235 aa).

This sequence belongs to the SAICAR synthetase family.

It catalyses the reaction 5-amino-1-(5-phospho-D-ribosyl)imidazole-4-carboxylate + L-aspartate + ATP = (2S)-2-[5-amino-1-(5-phospho-beta-D-ribosyl)imidazole-4-carboxamido]succinate + ADP + phosphate + 2 H(+). It participates in purine metabolism; IMP biosynthesis via de novo pathway; 5-amino-1-(5-phospho-D-ribosyl)imidazole-4-carboxamide from 5-amino-1-(5-phospho-D-ribosyl)imidazole-4-carboxylate: step 1/2. The sequence is that of Phosphoribosylaminoimidazole-succinocarboxamide synthase from Lachnoclostridium phytofermentans (strain ATCC 700394 / DSM 18823 / ISDg) (Clostridium phytofermentans).